The chain runs to 205 residues: LexA repressor (205 aa).

Positions 28 to 48 form a DNA-binding region, H-T-H motif; that stretch reads RAEIATRLGFKSANAAEEHLK. Active-site for autocatalytic cleavage activity residues include serine 122 and lysine 159.

This sequence belongs to the peptidase S24 family. In terms of assembly, homodimer.

The enzyme catalyses Hydrolysis of Ala-|-Gly bond in repressor LexA.. In terms of biological role, represses a number of genes involved in the response to DNA damage (SOS response), including recA and lexA. In the presence of single-stranded DNA, RecA interacts with LexA causing an autocatalytic cleavage which disrupts the DNA-binding part of LexA, leading to derepression of the SOS regulon and eventually DNA repair. The chain is LexA repressor from Shewanella denitrificans (strain OS217 / ATCC BAA-1090 / DSM 15013).